Reading from the N-terminus, the 118-residue chain is Ribonuclease P protein component (118 aa).

Belongs to the RnpA family. In terms of assembly, consists of a catalytic RNA component (M1 or rnpB) and a protein subunit.

It carries out the reaction Endonucleolytic cleavage of RNA, removing 5'-extranucleotides from tRNA precursor.. In terms of biological role, RNaseP catalyzes the removal of the 5'-leader sequence from pre-tRNA to produce the mature 5'-terminus. It can also cleave other RNA substrates such as 4.5S RNA. The protein component plays an auxiliary but essential role in vivo by binding to the 5'-leader sequence and broadening the substrate specificity of the ribozyme. This is Ribonuclease P protein component from Vibrio vulnificus (strain CMCP6).